The sequence spans 448 residues: Proline-rich protein 4 (448 aa).

The first 29 residues, 1-29, serve as a signal peptide directing secretion; that stretch reads MRILPEPRGSVPCLLLLVSVLLSATLSLA. Tandem repeats lie at residues 152–156, 157–161, 165–169, 170–174, 175–179, 183–187, 188–193, 194–198, 201–205, 208–212, 216–220, 222–226, 227–231, 232–236, 238–242, 245–249, 250–254, 256–259, 260–264, 265–270, 271–278, 279–284, 286–294, 295–299, 300–304, 306–311, 314–320, 321–327, 328–334, 335–341, 342–348, 349–356, 357–363, 364–368, 369–374, 378–384, 385–389, 390–394, 395–402, 403–407, 409–413, 414–419, 420–424, 425–429, 430–434, and 442–446. The segment at 152–446 is 46 X 5 AA approximate repeats; it reads PMPKLPPFKG…KFGKWPPLPP (295 aa). Residues 240 to 290 are compositionally biased toward pro residues; it reads PIPKKPCPPKPPKIEHPPPVPVYKPPPKIEKPPPVPVYKPPPKIEHPPPVP. Residues 240–345 form a disordered region; it reads PIPKKPCPPK…PPKIVIPPPK (106 aa). 2 stretches are compositionally biased toward pro residues: residues 306–319 and 327–345; these read PPPV…TKKP and PPPV…PPPK.

Belongs to the plant proline-rich protein superfamily. In terms of tissue distribution, mostly expressed in aerial organs, particularly in expanding leaves, stems, flowers, and siliques. Also present in stipules.

The protein resides in the secreted. Its subcellular location is the cell wall. The polypeptide is Proline-rich protein 4 (PRP4) (Arabidopsis thaliana (Mouse-ear cress)).